The chain runs to 135 residues: Ribosome-binding factor A (135 aa).

Belongs to the RbfA family. Monomer. Binds 30S ribosomal subunits, but not 50S ribosomal subunits or 70S ribosomes.

It localises to the cytoplasm. One of several proteins that assist in the late maturation steps of the functional core of the 30S ribosomal subunit. Associates with free 30S ribosomal subunits (but not with 30S subunits that are part of 70S ribosomes or polysomes). Required for efficient processing of 16S rRNA. May interact with the 5'-terminal helix region of 16S rRNA. In Bartonella henselae (strain ATCC 49882 / DSM 28221 / CCUG 30454 / Houston 1) (Rochalimaea henselae), this protein is Ribosome-binding factor A.